The sequence spans 152 residues: Ribosome maturation factor RimP (152 aa).

This sequence belongs to the RimP family.

It localises to the cytoplasm. Functionally, required for maturation of 30S ribosomal subunits. This is Ribosome maturation factor RimP from Pectobacterium atrosepticum (strain SCRI 1043 / ATCC BAA-672) (Erwinia carotovora subsp. atroseptica).